Here is a 366-residue protein sequence, read N- to C-terminus: Probable dual-specificity RNA methyltransferase RlmN (366 aa).

Glu108 acts as the Proton acceptor in catalysis. A Radical SAM core domain is found at 114–352 (YSDRSTLCIS…CTVRDTKGQE (239 aa)). A disulfide bond links Cys121 and Cys357. Cys128, Cys132, and Cys135 together coordinate [4Fe-4S] cluster. S-adenosyl-L-methionine is bound by residues 178-179 (GE), Ser212, 235-237 (SLH), and Asn314. Cys357 (S-methylcysteine intermediate) is an active-site residue.

This sequence belongs to the radical SAM superfamily. RlmN family. [4Fe-4S] cluster is required as a cofactor.

The protein resides in the cytoplasm. It carries out the reaction adenosine(2503) in 23S rRNA + 2 reduced [2Fe-2S]-[ferredoxin] + 2 S-adenosyl-L-methionine = 2-methyladenosine(2503) in 23S rRNA + 5'-deoxyadenosine + L-methionine + 2 oxidized [2Fe-2S]-[ferredoxin] + S-adenosyl-L-homocysteine. The catalysed reaction is adenosine(37) in tRNA + 2 reduced [2Fe-2S]-[ferredoxin] + 2 S-adenosyl-L-methionine = 2-methyladenosine(37) in tRNA + 5'-deoxyadenosine + L-methionine + 2 oxidized [2Fe-2S]-[ferredoxin] + S-adenosyl-L-homocysteine. In terms of biological role, specifically methylates position 2 of adenine 2503 in 23S rRNA and position 2 of adenine 37 in tRNAs. The sequence is that of Probable dual-specificity RNA methyltransferase RlmN from Corynebacterium glutamicum (strain ATCC 13032 / DSM 20300 / JCM 1318 / BCRC 11384 / CCUG 27702 / LMG 3730 / NBRC 12168 / NCIMB 10025 / NRRL B-2784 / 534).